The chain runs to 47 residues: Large ribosomal subunit protein bL34 (47 aa).

The protein belongs to the bacterial ribosomal protein bL34 family.

This Corynebacterium jeikeium (strain K411) protein is Large ribosomal subunit protein bL34.